The sequence spans 893 residues: MAELPQSRINERNITSEMRESFLDYAMSVIVSRALPDVRDGLKPVHRRILYGLNEQGMTPDKPYKKSARIVGDVMGKYHPHGDSSIYEAMVRMAQDFSYRYPLVDGQGNFGSMDGDGAAAMRYTEARMTKITLELLRDINKDTIDFIDNYDGNEREPSVLPARFPNLLVNGAAGIAVGMATNIPPHNLTEVIDGVLSLSKNPDITINELMEDIQGPDFPTAGLVLGKSGIRRAYETGRGSIQMRSRAEIEERGGGRQRIVVTEIPFQVNKARMIEKIAELVRDKKIDGITDLRDETSLRTGVRVVIDVRKDANASVILNNLYKQTPLQTSFGVNMIALVNSRPKLINLKEALIHYLEHQKTVVRRRTEYNLKKARDRAHILEGLRIALDHIDEIITTIRESDTDKIAMASLQERFKLTERQAQAILDMRLRRLTGLERDKIESEYNELLEYIKELEEILADEEVLLQLVRDELTEIKERFGDERRTEIQLGGLEDLEDEDLIPEEQIVITLSHNNYIKRLPVSTYRSQNRGGRGIQGMNTLDEDFVSQLVTMSTHDHVLFFTNKGRVYKLKGYEVPELSRQSKGIPIINAIELENDETISTMIAVKDLESEEDYLVFATKQGIVKRSSLSNFSRINKNGKIAINFKEDDELIAVRLTTGNEDILIGTAHASLIRFSESTLRPLGRTAAGVKGISLREGDTVVGLDVADSESEDEVLVVTENGYGKRTPVSEYRLSNRGGKGIKTATITERNGNIVCITTVTGEEDLMVVTNAGVIIRLDVHDISQNGRAAQGVRLMKLGDGQFVSTVAKVNEEDDNEENADEAQQSTTTETADVEEVVDDQTPGNAIHTEGDAEMESVESPENDDRIDIRQDFMDRVNEDIESASDNEEDSDE.

The Topo IIA-type catalytic domain maps to 35-501 (LPDVRDGLKP…GLEDLEDEDL (467 aa)). The O-(5'-phospho-DNA)-tyrosine intermediate role is filled by Tyr-123. The GyrA-box signature appears at 528-534 (QNRGGRG). The segment at 810–893 (VNEEDDNEEN…ASDNEEDSDE (84 aa)) is disordered. 2 stretches are compositionally biased toward acidic residues: residues 812–821 (EEDDNEENAD) and 852–862 (DAEMESVESPE). Basic and acidic residues predominate over residues 863–879 (NDDRIDIRQDFMDRVNE). Over residues 880 to 893 (DIESASDNEEDSDE) the composition is skewed to acidic residues.

This sequence belongs to the type II topoisomerase GyrA/ParC subunit family. In terms of assembly, heterotetramer, composed of two GyrA and two GyrB chains. In the heterotetramer, GyrA contains the active site tyrosine that forms a transient covalent intermediate with DNA, while GyrB binds cofactors and catalyzes ATP hydrolysis.

The protein resides in the cytoplasm. The catalysed reaction is ATP-dependent breakage, passage and rejoining of double-stranded DNA.. Its function is as follows. A type II topoisomerase that negatively supercoils closed circular double-stranded (ds) DNA in an ATP-dependent manner to modulate DNA topology and maintain chromosomes in an underwound state. Negative supercoiling favors strand separation, and DNA replication, transcription, recombination and repair, all of which involve strand separation. Also able to catalyze the interconversion of other topological isomers of dsDNA rings, including catenanes and knotted rings. Type II topoisomerases break and join 2 DNA strands simultaneously in an ATP-dependent manner. The chain is DNA gyrase subunit A from Staphylococcus epidermidis (strain ATCC 35984 / DSM 28319 / BCRC 17069 / CCUG 31568 / BM 3577 / RP62A).